A 234-amino-acid polypeptide reads, in one-letter code: Phosphoribosylaminoimidazole-succinocarboxamide synthase (234 aa).

Belongs to the SAICAR synthetase family.

The enzyme catalyses 5-amino-1-(5-phospho-D-ribosyl)imidazole-4-carboxylate + L-aspartate + ATP = (2S)-2-[5-amino-1-(5-phospho-beta-D-ribosyl)imidazole-4-carboxamido]succinate + ADP + phosphate + 2 H(+). It participates in purine metabolism; IMP biosynthesis via de novo pathway; 5-amino-1-(5-phospho-D-ribosyl)imidazole-4-carboxamide from 5-amino-1-(5-phospho-D-ribosyl)imidazole-4-carboxylate: step 1/2. This Pyrococcus abyssi (strain GE5 / Orsay) protein is Phosphoribosylaminoimidazole-succinocarboxamide synthase (purC).